The sequence spans 49 residues: Large ribosomal subunit protein bL33B (49 aa).

The protein belongs to the bacterial ribosomal protein bL33 family.

This is Large ribosomal subunit protein bL33B from Limosilactobacillus reuteri subsp. reuteri (strain JCM 1112) (Lactobacillus reuteri).